Consider the following 183-residue polypeptide: Dual-action ribosomal maturation protein DarP (183 aa).

The disordered stretch occupies residues 1–21 (MKQKPEDWLNDVPDNQEDDED).

The protein belongs to the DarP family.

Its subcellular location is the cytoplasm. Member of a network of 50S ribosomal subunit biogenesis factors which assembles along the 30S-50S interface, preventing incorrect 23S rRNA structures from forming. Promotes peptidyl transferase center (PTC) maturation. This is Dual-action ribosomal maturation protein DarP from Pectobacterium atrosepticum (strain SCRI 1043 / ATCC BAA-672) (Erwinia carotovora subsp. atroseptica).